A 394-amino-acid polypeptide reads, in one-letter code: S-adenosylmethionine synthase (394 aa).

His-18 contacts ATP. Asp-20 is a binding site for Mg(2+). Glu-46 is a K(+) binding site. L-methionine-binding residues include Glu-59 and Gln-102. The flexible loop stretch occupies residues 102–112 (QSPDIDMGVSA). ATP-binding positions include 175 to 177 (DGK), Asp-250, 256 to 257 (RK), Ala-273, and Lys-277. Residue Asp-250 participates in L-methionine binding. Lys-281 provides a ligand contact to L-methionine.

The protein belongs to the AdoMet synthase family. Homotetramer; dimer of dimers. Mg(2+) serves as cofactor. It depends on K(+) as a cofactor.

Its subcellular location is the cytoplasm. It catalyses the reaction L-methionine + ATP + H2O = S-adenosyl-L-methionine + phosphate + diphosphate. The protein operates within amino-acid biosynthesis; S-adenosyl-L-methionine biosynthesis; S-adenosyl-L-methionine from L-methionine: step 1/1. Functionally, catalyzes the formation of S-adenosylmethionine (AdoMet) from methionine and ATP. The overall synthetic reaction is composed of two sequential steps, AdoMet formation and the subsequent tripolyphosphate hydrolysis which occurs prior to release of AdoMet from the enzyme. This Brachyspira hyodysenteriae (strain ATCC 49526 / WA1) protein is S-adenosylmethionine synthase.